We begin with the raw amino-acid sequence, 353 residues long: Methionine import ATP-binding protein MetN (353 aa).

An ABC transporter domain is found at 8–249; sequence LDQIDVTFHQ…PKQPLTQDFI (242 aa). 42–49 lines the ATP pocket; the sequence is GYSGAGKS.

The protein belongs to the ABC transporter superfamily. Methionine importer (TC 3.A.1.24) family. The complex is composed of two ATP-binding proteins (MetN), two transmembrane proteins (MetI) and a solute-binding protein (MetQ).

Its subcellular location is the cell membrane. The catalysed reaction is L-methionine(out) + ATP + H2O = L-methionine(in) + ADP + phosphate + H(+). It carries out the reaction D-methionine(out) + ATP + H2O = D-methionine(in) + ADP + phosphate + H(+). Functionally, part of the ABC transporter complex MetNIQ involved in methionine import. Responsible for energy coupling to the transport system. The sequence is that of Methionine import ATP-binding protein MetN from Streptococcus pneumoniae serotype 4 (strain ATCC BAA-334 / TIGR4).